We begin with the raw amino-acid sequence, 910 residues long: E3 ubiquitin-protein ligase MARCHF6 (910 aa).

Met-1 bears the N-acetylmethionine mark. The RING-CH-type zinc-finger motif lies at 1 to 62; that stretch reads MDTAEEDICR…ELCKHRFAFT (62 aa). The Cytoplasmic portion of the chain corresponds to 1–91; sequence MDTAEEDICR…LVTSIGTAIR (91 aa). Zn(2+)-binding residues include Cys-9, Cys-12, Cys-26, Cys-28, His-36, Cys-39, Cys-52, and Cys-55. Residues 92–112 form a helical membrane-spanning segment; it reads YWFHYTLVAFAWLGVVPLTAC. Residues 113–142 lie on the Extracellular side of the membrane; the sequence is RIYKCLFTGSVSSLLTLPLDMLSTENLLAD. The helical transmembrane segment at 143–163 threads the bilayer; it reads CLQGCFVVTCTLCAFISLVWL. Topologically, residues 164-283 are cytoplasmic; sequence REQIVHGGAP…WERMLGLDGS (120 aa). Residues 185–256 are disordered; the sequence is AAGHHQNEAP…AADANNGAQD (72 aa). Positions 223–248 are enriched in acidic residues; it reads DAQDDQAEEEEEDNEEEDDAGVEDAA. A helical transmembrane segment spans residues 284–304; it reads LVFLEHVFWVVSLNTLFILVF. Topologically, residues 305–336 are extracellular; that stretch reads AFCPYHIGHFSLVGLGFEEHVQASHFEGLITT. The helical transmembrane segment at 337–357 threads the bilayer; the sequence is IVGYILLAITLIICHGLATLV. Over 358-376 the chain is Cytoplasmic; it reads KFHRSRRLLGVCYIVVKVS. Residues 377–397 traverse the membrane as a helical segment; sequence LLVVVEIGVFPLICGWWLDIC. Topologically, residues 398 to 421 are extracellular; the sequence is SLEMFDATLKDRELSFQSAPGTTM. A helical membrane pass occupies residues 422–442; it reads FLHWLVGMVYVFYFASFILLL. Residues 443–480 are Cytoplasmic-facing; sequence REVLRPGVLWFLRNLNDPDFNPVQEMIHLPIYRHLRRF. Residues 481 to 501 traverse the membrane as a helical segment; it reads ILSVIVFGSIVLLMLWLPIRI. Over 502 to 519 the chain is Extracellular; it reads IKSVLPNFLPYNVMLYSD. The chain crosses the membrane as a helical span at residues 520 to 540; it reads APVSELSLELLLLQVVLPALL. Residues 541-632 are Cytoplasmic-facing; it reads EQGHTRQWLK…YRRPLNFPLR (92 aa). Residues 633-653 form a helical membrane-spanning segment; the sequence is IFLLIVFMCITLLIASLICLT. At 654-678 the chain is on the extracellular side; that stretch reads LPVFAGRWLMSFWTGTAKIHELYTA. A helical transmembrane segment spans residues 679–699; that stretch reads ACGLYVCWLTIRAVTVMVAWM. At 700–721 the chain is on the cytoplasmic side; sequence PQGRRVIFQKVKEWSLMIMKTL. Residues 722–742 traverse the membrane as a helical segment; sequence IVAVLLAGVVPLLLGLLFELV. The Extracellular segment spans residues 743 to 764; it reads IVAPLRVPLDQTPLFYPWQDWA. Residues 765–785 traverse the membrane as a helical segment; that stretch reads LGVLHAKIIAAITLMGPQWWL. Residues 786-815 lie on the Cytoplasmic side of the membrane; sequence KTVIEQVYANGIRNIDLHYIVRKLAAPVIS. Residues 816-836 traverse the membrane as a helical segment; sequence VLLLSLCVPYVIASGVVPLLG. Over 837-848 the chain is Extracellular; the sequence is VTAEMQNLVHRR. A helical transmembrane segment spans residues 849 to 869; sequence IYPFLLMVVVLMAILSFQVRQ. The Cytoplasmic portion of the chain corresponds to 870-910; that stretch reads FKRLYEHIKNDKYLVGQRLVNYERKSGKQGSSPPPPQSSQE.

Interacts with DIO2. Interacts with SQLE. Post-translationally, auto-ubiquitinated, which results in proteasomal degradation. Deubiquitinated by USP19; protecting MARCHF6 from p97-mediated proteasomal degradation. Present in brain (at protein level).

The protein localises to the endoplasmic reticulum membrane. It carries out the reaction S-ubiquitinyl-[E2 ubiquitin-conjugating enzyme]-L-cysteine + [acceptor protein]-L-lysine = [E2 ubiquitin-conjugating enzyme]-L-cysteine + N(6)-ubiquitinyl-[acceptor protein]-L-lysine.. It participates in protein modification; protein ubiquitination. Functionally, endoplasmic reticulum membrane-associated E3 ubiquitin ligase that plays a critical role in mitigating endoplasmic reticulum stress, the regulation of cholesterol and lipid homeostasis, and ferroptosis. Acts as a pivotal component of both the Ac/N-degron pathway (targeting the N-terminal acetyl group of substrates) and the ER-associated protein degradation-cytosol (ERAD-C) pathway (targeting misfolded substrates). For instance, mediates the degradation of Ac/N-degron-bearing proteins such as the G-protein regulator RGS2 and the lipid droplet protein PLIN2. Suppresses endoplasmic reticulum stress and ferroptosis through cytosolic POMC degradation. Prevents ferroptosis by acting as a NADPH sensor during lipid peroxidation through its C-terminal regulatory region. Facilitates also the degradation of selected endoplasmic reticulum proteins by associating with signal peptide peptidase for the turnover of endogenous tail-anchored proteins. Promotes ubiquitination of DIO2, leading to its degradation. By ubiquitinating and thereby modulating the stability of many proteins of the cholesterol pathway including SQLE, CYP51A1, CYP11A1 and HMGCR, acts as a crucial post-translational regulator of cholesterol synthesis. The polypeptide is E3 ubiquitin-protein ligase MARCHF6 (Homo sapiens (Human)).